The sequence spans 906 residues: Protein translocase subunit SecA (906 aa).

ATP contacts are provided by residues Q89, 107-111, and D502; that span reads GEGKT. C890, C892, C901, and H902 together coordinate Zn(2+).

Belongs to the SecA family. Monomer and homodimer. Part of the essential Sec protein translocation apparatus which comprises SecA, SecYEG and auxiliary proteins SecDF-YajC and YidC. Zn(2+) is required as a cofactor.

Its subcellular location is the cell inner membrane. The protein localises to the cytoplasm. It carries out the reaction ATP + H2O + cellular proteinSide 1 = ADP + phosphate + cellular proteinSide 2.. Part of the Sec protein translocase complex. Interacts with the SecYEG preprotein conducting channel. Has a central role in coupling the hydrolysis of ATP to the transfer of proteins into and across the cell membrane, serving both as a receptor for the preprotein-SecB complex and as an ATP-driven molecular motor driving the stepwise translocation of polypeptide chains across the membrane. The polypeptide is Protein translocase subunit SecA (Bartonella quintana (strain Toulouse) (Rochalimaea quintana)).